A 124-amino-acid polypeptide reads, in one-letter code: Fluoride-specific ion channel FluC (124 aa).

Transmembrane regions (helical) follow at residues 4–24, 35–55, 60–80, and 102–122; these read LLLV…ISIF, FGTL…YALG, ISPE…TTFS, and VVLN…LVFS. 2 residues coordinate Na(+): glycine 74 and threonine 77.

The protein belongs to the fluoride channel Fluc/FEX (TC 1.A.43) family.

The protein resides in the cell inner membrane. The enzyme catalyses fluoride(in) = fluoride(out). Na(+) is not transported, but it plays an essential structural role and its presence is essential for fluoride channel function. In terms of biological role, fluoride-specific ion channel. Important for reducing fluoride concentration in the cell, thus reducing its toxicity. The protein is Fluoride-specific ion channel FluC of Shewanella baltica (strain OS185).